A 1028-amino-acid chain; its full sequence is Pentatricopeptide repeat-containing protein At3g09040, mitochondrial (1028 aa).

A mitochondrion-targeting transit peptide spans 1–30 (MYFRVLLTPSSAMFDSFSFVRRLSYSPDLG). 24 PPR repeats span residues 94-123 (EGRL…FLEK), 124-158 (DVTA…QIFP), 159-193 (NKFT…GLER), 194-224 (NSYC…IVDP), 225-259 (NTVC…GHRP), 260-290 (DHLA…MSSP), 291-325 (DVVA…SVKS), 326-360 (TRST…GLAS), 361-391 (NIYV…LEEK), 392-426 (NDVF…GYNI), 427-461 (DDFT…KLAK), 462-492 (NLFV…MCDR), 493-527 (DNVT…GIVS), 528-562 (DGAC…GLDR), 563-593 (DLHT…LPEW), 594-627 (SVVS…GVNP), 628-662 (SEIT…GFSS), 664-694 (GEYL…LSSP), 696-730 (SIVL…GVLP), 731-765 (DQAT…AHDL), 766-796 (DELT…MRRR), 798-832 (NVVS…HIMP), 833-863 (DEIT…MIGQ), and 869-899 (RVDH…QNLK). The tract at residues 904–979 (LWSSLLGACR…VPGYSWIDVE (76 aa)) is type E motif. The segment at 980-1010 (QRTHIFAAGDKSHSEIGKIEMFLEDLYDLMK) is type E(+) motif.

This sequence belongs to the PPR family. PCMP-E subfamily.

The protein localises to the mitochondrion. This Arabidopsis thaliana (Mouse-ear cress) protein is Pentatricopeptide repeat-containing protein At3g09040, mitochondrial (PCMP-E88).